Here is a 359-residue protein sequence, read N- to C-terminus: MSQVYNFSAGPAMLPTQVLKQMQDELLEYGNTKASVMEISHRDPYFIAMAQKLEQDLRDLMGIPNHYKVLFLQGGASAQFSMVPINLLQGKTKANYAHTGHWSKKAITEGKRYCEVNICTDSSDNKYTDIDVFENWNIDPDGAYLHYTPNETIAGLEFDYVPEVDMPLVADMSSSILSREVDVSKYGVIYASAQKNIGIAGLTIVIVRENLMGNVLANQPVLFDYTTQANNDSMYNTPSTYSWYAASRVFEWLKQQGGLSAMAKINQTKAKTLYDAINGSDFYSNPVAIKYRSWMNVPFLLADESLNGFFLEKAIANNLITLKGHRSVGGMRASIYNAMPQDGINELVNFMKVFEKENT.

Arginine 42 lines the L-glutamate pocket. Pyridoxal 5'-phosphate-binding positions include 76-77, tryptophan 102, threonine 152, aspartate 171, and glutamine 194; that span reads AS. Lysine 195 carries the post-translational modification N6-(pyridoxal phosphate)lysine. 236–237 lines the pyridoxal 5'-phosphate pocket; it reads NT.

This sequence belongs to the class-V pyridoxal-phosphate-dependent aminotransferase family. SerC subfamily. In terms of assembly, homodimer. Requires pyridoxal 5'-phosphate as cofactor.

Its subcellular location is the cytoplasm. It catalyses the reaction O-phospho-L-serine + 2-oxoglutarate = 3-phosphooxypyruvate + L-glutamate. It carries out the reaction 4-(phosphooxy)-L-threonine + 2-oxoglutarate = (R)-3-hydroxy-2-oxo-4-phosphooxybutanoate + L-glutamate. Its pathway is amino-acid biosynthesis; L-serine biosynthesis; L-serine from 3-phospho-D-glycerate: step 2/3. The protein operates within cofactor biosynthesis; pyridoxine 5'-phosphate biosynthesis; pyridoxine 5'-phosphate from D-erythrose 4-phosphate: step 3/5. Catalyzes the reversible conversion of 3-phosphohydroxypyruvate to phosphoserine and of 3-hydroxy-2-oxo-4-phosphonooxybutanoate to phosphohydroxythreonine. The sequence is that of Phosphoserine aminotransferase from Ruthia magnifica subsp. Calyptogena magnifica.